The primary structure comprises 219 residues: Ribose-5-phosphate isomerase A (219 aa).

Residues 28–31, 81–84, and 94–97 each bind substrate; these read TGST, DGAD, and KGGG. The active-site Proton acceptor is the Glu-103. Lys-121 serves as a coordination point for substrate.

The protein belongs to the ribose 5-phosphate isomerase family. In terms of assembly, homodimer.

It catalyses the reaction aldehydo-D-ribose 5-phosphate = D-ribulose 5-phosphate. It participates in carbohydrate degradation; pentose phosphate pathway; D-ribose 5-phosphate from D-ribulose 5-phosphate (non-oxidative stage): step 1/1. Its function is as follows. Catalyzes the reversible conversion of ribose-5-phosphate to ribulose 5-phosphate. This chain is Ribose-5-phosphate isomerase A, found in Enterobacter cloacae.